The chain runs to 496 residues: N-succinylglutamate 5-semialdehyde dehydrogenase (496 aa).

229–234 contacts NAD(+); the sequence is GSYATG. Catalysis depends on residues Glu-252 and Cys-286.

Belongs to the aldehyde dehydrogenase family. AstD subfamily.

The catalysed reaction is N-succinyl-L-glutamate 5-semialdehyde + NAD(+) + H2O = N-succinyl-L-glutamate + NADH + 2 H(+). It participates in amino-acid degradation; L-arginine degradation via AST pathway; L-glutamate and succinate from L-arginine: step 4/5. In terms of biological role, catalyzes the NAD-dependent reduction of succinylglutamate semialdehyde into succinylglutamate. This Legionella pneumophila subsp. pneumophila (strain Philadelphia 1 / ATCC 33152 / DSM 7513) protein is N-succinylglutamate 5-semialdehyde dehydrogenase.